We begin with the raw amino-acid sequence, 86 residues long: Insulin (86 aa).

Intrachain disulfides connect cysteine 7–cysteine 72, cysteine 19–cysteine 85, and cysteine 71–cysteine 76. The propeptide at 33–63 is c peptide; it reads ELEDPQVGQADPGVVPEAGRLQPLALEMTLQ.

It belongs to the insulin family. In terms of assembly, heterodimer of a B chain and an A chain linked by two disulfide bonds.

Its subcellular location is the secreted. Its function is as follows. Insulin decreases blood glucose concentration. It increases cell permeability to monosaccharides, amino acids and fatty acids. It accelerates glycolysis, the pentose phosphate cycle, and glycogen synthesis in liver. This chain is Insulin (INS), found in Chinchilla chinchilla (Short-tailed chinchilla).